A 1374-amino-acid chain; its full sequence is DNA-directed RNA polymerase subunit beta (1374 aa).

The protein belongs to the RNA polymerase beta chain family. The RNAP catalytic core consists of 2 alpha, 1 beta, 1 beta' and 1 omega subunit. When a sigma factor is associated with the core the holoenzyme is formed, which can initiate transcription.

The enzyme catalyses RNA(n) + a ribonucleoside 5'-triphosphate = RNA(n+1) + diphosphate. In terms of biological role, DNA-dependent RNA polymerase catalyzes the transcription of DNA into RNA using the four ribonucleoside triphosphates as substrates. This Paracidovorax citrulli (strain AAC00-1) (Acidovorax citrulli) protein is DNA-directed RNA polymerase subunit beta.